We begin with the raw amino-acid sequence, 294 residues long: Eukaryotic translation initiation factor 3 subunit F (294 aa).

The region spanning 20–163 (VTVTAQALFQ…IDPSKNSGNC (144 aa)) is the MPN domain.

Belongs to the eIF-3 subunit F family. In terms of assembly, component of the eukaryotic translation initiation factor 3 (eIF-3) complex.

It localises to the cytoplasm. Component of the eukaryotic translation initiation factor 3 (eIF-3) complex, which is involved in protein synthesis of a specialized repertoire of mRNAs and, together with other initiation factors, stimulates binding of mRNA and methionyl-tRNAi to the 40S ribosome. The eIF-3 complex specifically targets and initiates translation of a subset of mRNAs involved in cell proliferation. This Yarrowia lipolytica (strain CLIB 122 / E 150) (Yeast) protein is Eukaryotic translation initiation factor 3 subunit F.